The primary structure comprises 152 residues: Large ribosomal subunit protein eL32 (152 aa).

It belongs to the eukaryotic ribosomal protein eL32 family.

This is Large ribosomal subunit protein eL32 (rpl32e) from Pyrobaculum aerophilum (strain ATCC 51768 / DSM 7523 / JCM 9630 / CIP 104966 / NBRC 100827 / IM2).